The chain runs to 127 residues: Large ribosomal subunit protein bL20 (127 aa).

The protein belongs to the bacterial ribosomal protein bL20 family.

Functionally, binds directly to 23S ribosomal RNA and is necessary for the in vitro assembly process of the 50S ribosomal subunit. It is not involved in the protein synthesizing functions of that subunit. The protein is Large ribosomal subunit protein bL20 of Bifidobacterium longum (strain NCC 2705).